A 562-amino-acid polypeptide reads, in one-letter code: SPI-1 type 3 secretion system secretin (562 aa).

An N-terminal signal peptide occupies residues 1–24 (MKTHILLARVLACAALVLVTPGYS).

It belongs to the bacterial secretin family. T3SS SctC subfamily. As to quaternary structure, the core secretion machinery of the T3SS is composed of approximately 20 different proteins, including cytoplasmic components, a base, an export apparatus and a needle. This subunit is part of the base, which anchors the injectisome in the bacterial cell envelope. Forms a stable homooligomeric complex. The complex is composed of 15 subunits.

It is found in the cell outer membrane. In terms of biological role, component of the type III secretion system (T3SS), also called injectisome, which is used to inject bacterial effector proteins into eukaryotic host cells. Forms a ring-shaped multimeric structure with an apparent central pore in the outer membrane. The protein is SPI-1 type 3 secretion system secretin of Salmonella typhimurium (strain LT2 / SGSC1412 / ATCC 700720).